Here is a 188-residue protein sequence, read N- to C-terminus: MSHSSSGAPLDPVAFIHSQIRTVPDWPQPGVMFRDITTLLQSPKALRILVDLFVERYVDAKLDYVAGLDARGFIIAPIVAYELSVGFVPIRKVGKLPYKTRSESYELEYGSATVEIHEDACKPGDRVIIMDDLIATGGTMMAGRNLLERLGAVVVEGAAIIDLPDLGGSALLRNAGLPVYTVTEFAGH.

The protein belongs to the purine/pyrimidine phosphoribosyltransferase family. Homodimer.

The protein localises to the cytoplasm. It carries out the reaction AMP + diphosphate = 5-phospho-alpha-D-ribose 1-diphosphate + adenine. It participates in purine metabolism; AMP biosynthesis via salvage pathway; AMP from adenine: step 1/1. In terms of biological role, catalyzes a salvage reaction resulting in the formation of AMP, that is energically less costly than de novo synthesis. The protein is Adenine phosphoribosyltransferase of Burkholderia multivorans (strain ATCC 17616 / 249).